The chain runs to 207 residues: Phenazine biosynthesis protein PhzD1 (207 aa).

Asp-38 serves as the catalytic Proton donor. Residues Gln-78, Arg-87, Lys-122, and 151–155 (YAHVG) each bind substrate.

Belongs to the isochorismatase family. In terms of assembly, homodimer.

The catalysed reaction is (2S)-2-amino-4-deoxychorismate + H2O = (5S,6S)-6-amino-5-hydroxycyclohexa-1,3-diene-1-carboxyate + pyruvate. Its pathway is antibiotic biosynthesis; phenazine biosynthesis. In terms of biological role, involved in the biosynthesis of the antibiotic phenazine, a nitrogen-containing heterocyclic molecule. PhzD1 (operon phzA1B1C1E1F1G1) has a role in the biosynthesis of the phenazine during planktonic growth. Catalyzes the hydrolysis of the vinyl ether functional group of 2-amino-2-deoxyisochorismate (ADIC), yielding pyruvate and trans-2,3-dihydro-3-hydroxyanthranilic acid (DHHA). Also able to act on isochorismate, chorismate and 4-amino-4-deoxychorismate (ADC) as substrates. This Pseudomonas aeruginosa (strain ATCC 15692 / DSM 22644 / CIP 104116 / JCM 14847 / LMG 12228 / 1C / PRS 101 / PAO1) protein is Phenazine biosynthesis protein PhzD1.